Here is a 246-residue protein sequence, read N- to C-terminus: 4-hydroxy-tetrahydrodipicolinate reductase (246 aa).

Residue 9–14 (GNTGRM) participates in NAD(+) binding. NADP(+) is bound at residue arginine 36. NAD(+) contacts are provided by residues 78–80 (GTT) and 104–107 (SPNM). Histidine 137 serves as the catalytic Proton donor/acceptor. A (S)-2,3,4,5-tetrahydrodipicolinate-binding site is contributed by histidine 138. Catalysis depends on lysine 141, which acts as the Proton donor. A (S)-2,3,4,5-tetrahydrodipicolinate-binding site is contributed by 147-148 (GT).

The protein belongs to the DapB family.

The protein resides in the cytoplasm. It carries out the reaction (S)-2,3,4,5-tetrahydrodipicolinate + NAD(+) + H2O = (2S,4S)-4-hydroxy-2,3,4,5-tetrahydrodipicolinate + NADH + H(+). The enzyme catalyses (S)-2,3,4,5-tetrahydrodipicolinate + NADP(+) + H2O = (2S,4S)-4-hydroxy-2,3,4,5-tetrahydrodipicolinate + NADPH + H(+). The protein operates within amino-acid biosynthesis; L-lysine biosynthesis via DAP pathway; (S)-tetrahydrodipicolinate from L-aspartate: step 4/4. Catalyzes the conversion of 4-hydroxy-tetrahydrodipicolinate (HTPA) to tetrahydrodipicolinate. This chain is 4-hydroxy-tetrahydrodipicolinate reductase, found in Chlamydia muridarum (strain MoPn / Nigg).